We begin with the raw amino-acid sequence, 120 residues long: U13-lycotoxin-Ls1e (120 aa).

A signal peptide spans methionine 1 to cysteine 16. A propeptide spanning residues phenylalanine 17–arginine 54 is cleaved from the precursor. 4 cysteine pairs are disulfide-bonded: cysteine 56–cysteine 70, cysteine 63–cysteine 76, cysteine 69–cysteine 87, and cysteine 78–cysteine 85. One can recognise an Agouti domain in the interval cysteine 56–cysteine 95.

Belongs to the neurotoxin 05 (agouti) family. In terms of processing, contains 6 disulfide bonds. In terms of tissue distribution, expressed by the venom gland.

The protein localises to the secreted. This Lycosa singoriensis (Wolf spider) protein is U13-lycotoxin-Ls1e.